The chain runs to 158 residues: NADH-quinone oxidoreductase subunit B (158 aa).

C37, C38, C102, and C132 together coordinate [4Fe-4S] cluster.

Belongs to the complex I 20 kDa subunit family. NDH-1 is composed of 14 different subunits. Subunits NuoB, C, D, E, F, and G constitute the peripheral sector of the complex. Requires [4Fe-4S] cluster as cofactor.

The protein resides in the cell inner membrane. The enzyme catalyses a quinone + NADH + 5 H(+)(in) = a quinol + NAD(+) + 4 H(+)(out). Its function is as follows. NDH-1 shuttles electrons from NADH, via FMN and iron-sulfur (Fe-S) centers, to quinones in the respiratory chain. The immediate electron acceptor for the enzyme in this species is believed to be ubiquinone. Couples the redox reaction to proton translocation (for every two electrons transferred, four hydrogen ions are translocated across the cytoplasmic membrane), and thus conserves the redox energy in a proton gradient. The protein is NADH-quinone oxidoreductase subunit B of Thiobacillus denitrificans (strain ATCC 25259 / T1).